Consider the following 395-residue polypeptide: Chorismate synthase (395 aa).

NADP(+) is bound by residues Arg40 and Arg46. Residues Arg134 to Ser136, Gln256 to Ala257, Gly301, Lys316 to Thr320, and Arg342 contribute to the FMN site.

Belongs to the chorismate synthase family. Homotetramer. Requires FMNH2 as cofactor.

It catalyses the reaction 5-O-(1-carboxyvinyl)-3-phosphoshikimate = chorismate + phosphate. It functions in the pathway metabolic intermediate biosynthesis; chorismate biosynthesis; chorismate from D-erythrose 4-phosphate and phosphoenolpyruvate: step 7/7. Functionally, catalyzes the anti-1,4-elimination of the C-3 phosphate and the C-6 proR hydrogen from 5-enolpyruvylshikimate-3-phosphate (EPSP) to yield chorismate, which is the branch point compound that serves as the starting substrate for the three terminal pathways of aromatic amino acid biosynthesis. This reaction introduces a second double bond into the aromatic ring system. This Beutenbergia cavernae (strain ATCC BAA-8 / DSM 12333 / CCUG 43141 / JCM 11478 / NBRC 16432 / NCIMB 13614 / HKI 0122) protein is Chorismate synthase.